Here is a 386-residue protein sequence, read N- to C-terminus: Cell division protein FtsZ (386 aa).

Residues 18–22 (GGGVN), 105–107 (GTG), Glu-136, Arg-140, and Asp-184 contribute to the GTP site.

This sequence belongs to the FtsZ family. As to quaternary structure, homodimer. Polymerizes to form a dynamic ring structure in a strictly GTP-dependent manner. Interacts directly with several other division proteins.

It is found in the cytoplasm. Functionally, essential cell division protein that forms a contractile ring structure (Z ring) at the future cell division site. The regulation of the ring assembly controls the timing and the location of cell division. One of the functions of the FtsZ ring is to recruit other cell division proteins to the septum to produce a new cell wall between the dividing cells. Binds GTP and shows GTPase activity. The chain is Cell division protein FtsZ from Mycobacterium kansasii.